The chain runs to 49 residues: Light-harvesting protein B-875 beta chain (49 aa).

Residues 2–27 (ADKSDLGYTGLTDEQAQELHSVYMSG) are Cytoplasmic-facing. 2 residues coordinate a bacteriochlorophyll: His-21 and His-39. A helical; Signal-anchor for type II membrane protein transmembrane segment spans residues 28–45 (LWLFSAVAIVAHLAVYIW). At 46–49 (RPWF) the chain is on the periplasmic side.

The protein belongs to the antenna complex beta subunit family. The core complex is formed by different alpha and beta chains, binding bacteriochlorophyll molecules, and arranged most probably in tetrameric structures disposed around the reaction center. The non-pigmented gamma chains may constitute additional components.

The protein localises to the cell inner membrane. In terms of biological role, antenna complexes are light-harvesting systems, which transfer the excitation energy to the reaction centers. This chain is Light-harvesting protein B-875 beta chain (pufB), found in Cereibacter sphaeroides (strain ATCC 17023 / DSM 158 / JCM 6121 / CCUG 31486 / LMG 2827 / NBRC 12203 / NCIMB 8253 / ATH 2.4.1.) (Rhodobacter sphaeroides).